Consider the following 101-residue polypeptide: U1-sicaritoxin-Li1a (101 aa).

The N-terminal stretch at 1–19 (MRFLVGAVLVVVLVACATA) is a signal peptide. A propeptide spanning residues 20–35 (FESDAETFKSLVVEER) is cleaved from the precursor. 4 disulfide bridges follow: Cys37–Cys54, Cys45–Cys59, Cys53–Cys72, and Cys61–Cys70. A Lysine amide modification is found at Lys81. Residues 85-101 (ALLLPVETHRLLFPEQW) constitute a propeptide that is removed on maturation.

The protein belongs to the neurotoxin 28 (Litx) family. In terms of tissue distribution, expressed by the venom gland.

The protein localises to the secreted. Its function is as follows. Toxin active against insects (S.frugiperda larvae). May act on sodium (Nav) or calcium channels (Cav). In Loxosceles intermedia (Brown spider), this protein is U1-sicaritoxin-Li1a.